The sequence spans 176 residues: RNA pyrophosphohydrolase (176 aa).

A Nudix hydrolase domain is found at 6–149 (GYRPNVGIVI…KRDVYRRVMK (144 aa)). The short motif at 38–59 (GGINPGESAEQAMYRELFEEVG) is the Nudix box element.

The protein belongs to the Nudix hydrolase family. RppH subfamily. It depends on a divalent metal cation as a cofactor.

In terms of biological role, accelerates the degradation of transcripts by removing pyrophosphate from the 5'-end of triphosphorylated RNA, leading to a more labile monophosphorylated state that can stimulate subsequent ribonuclease cleavage. This chain is RNA pyrophosphohydrolase, found in Salmonella arizonae (strain ATCC BAA-731 / CDC346-86 / RSK2980).